Here is a 430-residue protein sequence, read N- to C-terminus: Long-chain specific acyl-CoA dehydrogenase, mitochondrial (430 aa).

The transit peptide at 1-30 (MAARLLLRSLRVLKARSAPRPPPSARCSHS) directs the protein to the mitochondrion. A disordered region spans residues 17–39 (SAPRPPPSARCSHSGAEARLETP). Lys42 is subject to N6-acetyllysine. Phosphoserine is present on residues Ser54 and Ser55. An N6-acetyllysine; alternate mark is found at Lys66 and Lys81. 2 positions are modified to N6-succinyllysine; alternate: Lys66 and Lys81. Lys92 and Lys95 each carry N6-acetyllysine. Lys165 bears the N6-succinyllysine mark. 170–179 (IAMTEPGAGS) lines the FAD pocket. Residue Ser179 coordinates substrate. At Ser191 the chain carries Phosphoserine. 203-205 (FIT) serves as a coordination point for FAD. Residue 227–228 (AH) coordinates substrate. The residue at position 240 (Lys240) is an N6-succinyllysine. Lys254 and Lys279 each carry N6-acetyllysine; alternate. 2 positions are modified to N6-succinyllysine; alternate: Lys254 and Lys279. Substrate is bound by residues Tyr282 and 289–292 (PQER). Glu291 functions as the Proton acceptor in the catalytic mechanism. FAD is bound at residue Arg317. Residue Lys318 is modified to N6-acetyllysine. Position 322 is an N6-acetyllysine; alternate (Lys322). Residue Lys322 is modified to N6-succinyllysine; alternate. Gln328 lines the FAD pocket. Lys358 carries the N6-acetyllysine modification. Position 362 is a phosphoserine (Ser362). 385–389 (QLHGG) is an FAD binding site. 412–413 (GG) contributes to the substrate binding site. 414 to 416 (TNE) contacts FAD.

This sequence belongs to the acyl-CoA dehydrogenase family. Homotetramer. The cofactor is FAD. In terms of processing, acetylation at Lys-318 and Lys-322 in proximity of the cofactor-binding sites strongly reduces catalytic activity. These sites are deacetylated by SIRT3. Expressed in heart, skeletal muscle, kidney, and brain. Expressed in liver (at protein level).

The protein resides in the mitochondrion matrix. The enzyme catalyses a long-chain 2,3-saturated fatty acyl-CoA + oxidized [electron-transfer flavoprotein] + H(+) = a long-chain (2E)-enoyl-CoA + reduced [electron-transfer flavoprotein]. It catalyses the reaction oxidized [electron-transfer flavoprotein] + hexadecanoyl-CoA + H(+) = (2E)-hexadecenoyl-CoA + reduced [electron-transfer flavoprotein]. It carries out the reaction hexanoyl-CoA + oxidized [electron-transfer flavoprotein] + H(+) = (2E)-hexenoyl-CoA + reduced [electron-transfer flavoprotein]. The catalysed reaction is octanoyl-CoA + oxidized [electron-transfer flavoprotein] + H(+) = (2E)-octenoyl-CoA + reduced [electron-transfer flavoprotein]. The enzyme catalyses decanoyl-CoA + oxidized [electron-transfer flavoprotein] + H(+) = (2E)-decenoyl-CoA + reduced [electron-transfer flavoprotein]. It catalyses the reaction dodecanoyl-CoA + oxidized [electron-transfer flavoprotein] + H(+) = (2E)-dodecenoyl-CoA + reduced [electron-transfer flavoprotein]. It carries out the reaction tetradecanoyl-CoA + oxidized [electron-transfer flavoprotein] + H(+) = (2E)-tetradecenoyl-CoA + reduced [electron-transfer flavoprotein]. The catalysed reaction is octadecanoyl-CoA + oxidized [electron-transfer flavoprotein] + H(+) = (2E)-octadecenoyl-CoA + reduced [electron-transfer flavoprotein]. The enzyme catalyses eicosanoyl-CoA + oxidized [electron-transfer flavoprotein] + H(+) = (2E)-eicosenoyl-CoA + reduced [electron-transfer flavoprotein]. It catalyses the reaction docosanoyl-CoA + oxidized [electron-transfer flavoprotein] + H(+) = (2E)-docosenoyl-CoA + reduced [electron-transfer flavoprotein]. It carries out the reaction tetracosanoyl-CoA + oxidized [electron-transfer flavoprotein] + H(+) = (2E)-tetracosenoyl-CoA + reduced [electron-transfer flavoprotein]. The catalysed reaction is (5E)-tetradecenoyl-CoA + oxidized [electron-transfer flavoprotein] + H(+) = (2E,5E)-tetradecadienoyl-CoA + reduced [electron-transfer flavoprotein]. The enzyme catalyses (5Z)-tetradecenoyl-CoA + oxidized [electron-transfer flavoprotein] + H(+) = (2E,5Z)-tetradecadienoyl-CoA + reduced [electron-transfer flavoprotein]. It catalyses the reaction oxidized [electron-transfer flavoprotein] + (9Z)-octadecenoyl-CoA + H(+) = (2E,9Z)-octadecadienoyl-CoA + reduced [electron-transfer flavoprotein]. The protein operates within lipid metabolism; mitochondrial fatty acid beta-oxidation. Functionally, long-chain specific acyl-CoA dehydrogenase is one of the acyl-CoA dehydrogenases that catalyze the first step of mitochondrial fatty acid beta-oxidation, an aerobic process breaking down fatty acids into acetyl-CoA and allowing the production of energy from fats. The first step of fatty acid beta-oxidation consists in the removal of one hydrogen from C-2 and C-3 of the straight-chain fatty acyl-CoA thioester, resulting in the formation of trans-2-enoyl-CoA. Among the different mitochondrial acyl-CoA dehydrogenases, long-chain specific acyl-CoA dehydrogenase can act on saturated and unsaturated acyl-CoAs with 6 to 24 carbons with a preference for 8 to 18 carbons long primary chains. This chain is Long-chain specific acyl-CoA dehydrogenase, mitochondrial, found in Mus musculus (Mouse).